Here is a 467-residue protein sequence, read N- to C-terminus: Zinc finger protein mex-6 (467 aa).

2 stretches are compositionally biased toward low complexity: residues 1 to 22 (MTAT…ATAQ) and 179 to 195 (STTR…LPTS). Disordered regions lie at residues 1 to 35 (MTAT…QQHP) and 163 to 209 (TNPQ…NRNS). T190 carries the post-translational modification Phosphothreonine. Basic and acidic residues predominate over residues 196 to 207 (REYETVQRDRNR). 2 C3H1-type zinc fingers span residues 273–302 (NFKT…HGLK) and 317–347 (KYKT…HPSD). Positions 425–451 (INENDLPPHLRRIRRGNPPVTRSRPSF) are disordered. S457 is modified (phosphoserine).

In terms of assembly, interacts (probably when phosphorylated on Thr-190) with plk-1 (via POLO box domain) and plk-2 (via POLO box domain). In terms of processing, phosphorylation on Ser-457 by par-1 promotes localization of the protein to the anterior cytoplasm of the zygote.

The protein localises to the cytoplasm. Functionally, functions with mex-5 to affect embryonic viability, establish soma germline asymmetry in embryos and establish plk-1, pie-1, mex-1, and pos-1 asymmetry in embryos. Also affects formation of intestinal cells. The sequence is that of Zinc finger protein mex-6 (mex-6) from Caenorhabditis elegans.